The primary structure comprises 273 residues: Thiazole synthase (273 aa).

The active-site Schiff-base intermediate with DXP is the lysine 113. 1-deoxy-D-xylulose 5-phosphate is bound by residues glycine 174, 201–202 (AG), and 223–224 (NT).

This sequence belongs to the ThiG family. Homotetramer. Forms heterodimers with either ThiH or ThiS.

It is found in the cytoplasm. The enzyme catalyses [ThiS sulfur-carrier protein]-C-terminal-Gly-aminoethanethioate + 2-iminoacetate + 1-deoxy-D-xylulose 5-phosphate = [ThiS sulfur-carrier protein]-C-terminal Gly-Gly + 2-[(2R,5Z)-2-carboxy-4-methylthiazol-5(2H)-ylidene]ethyl phosphate + 2 H2O + H(+). It participates in cofactor biosynthesis; thiamine diphosphate biosynthesis. Catalyzes the rearrangement of 1-deoxy-D-xylulose 5-phosphate (DXP) to produce the thiazole phosphate moiety of thiamine. Sulfur is provided by the thiocarboxylate moiety of the carrier protein ThiS. In vitro, sulfur can be provided by H(2)S. The chain is Thiazole synthase from Salinibacter ruber (strain DSM 13855 / M31).